The chain runs to 289 residues: 4-diphosphocytidyl-2-C-methyl-D-erythritol kinase (289 aa).

The active site involves Lys10. Residue 94–104 coordinates ATP; it reads PVAAGLAGGSS. Asp136 is an active-site residue.

Belongs to the GHMP kinase family. IspE subfamily.

It catalyses the reaction 4-CDP-2-C-methyl-D-erythritol + ATP = 4-CDP-2-C-methyl-D-erythritol 2-phosphate + ADP + H(+). It functions in the pathway isoprenoid biosynthesis; isopentenyl diphosphate biosynthesis via DXP pathway; isopentenyl diphosphate from 1-deoxy-D-xylulose 5-phosphate: step 3/6. In terms of biological role, catalyzes the phosphorylation of the position 2 hydroxy group of 4-diphosphocytidyl-2C-methyl-D-erythritol. This chain is 4-diphosphocytidyl-2-C-methyl-D-erythritol kinase, found in Bacillus pumilus (strain SAFR-032).